The following is a 114-amino-acid chain: MSQAEMSTCSTPHTQRVFQEAVRKGNTKELQSLLQNMTNCEFNVNSFGPEGQTALHQSVIDGNLELVKLLVKFGADIRLANRDGWSALHIAAYGGHQDIVLYLITKAKYSSSSR.

2 ANK repeats span residues 50–79 (EGQTALHQSVIDGNLELVKLLVKFGADIRL) and 83–112 (DGWSALHIAAYGGHQDIVLYLITKAKYSSS).

It belongs to the NRARP family. In terms of assembly, forms a ternary complex with the intracellular domain (ICD) of notch1 and rbpj/suh.

Its function is as follows. Promotes loss of intracellular domain (ICD) of Notch1 in embryos. By down-regulating ICD levels, could function as a negative feedback regulator of Notch signaling that attenuates ICD-mediated transcription. Involved in angiogenesis. May be involved in somitogenesis. The polypeptide is Notch-regulated ankyrin repeat-containing protein (nrarp) (Xenopus tropicalis (Western clawed frog)).